A 100-amino-acid polypeptide reads, in one-letter code: NADH-quinone oxidoreductase subunit K (100 aa).

A run of 3 helical transmembrane segments spans residues 2 to 22, 28 to 48, and 64 to 84; these read IPLS…VAGF, IIVM…NLVA, and FVIT…ICLF.

It belongs to the complex I subunit 4L family. In terms of assembly, NDH-1 is composed of 14 different subunits. Subunits NuoA, H, J, K, L, M, N constitute the membrane sector of the complex.

Its subcellular location is the cell inner membrane. It carries out the reaction a quinone + NADH + 5 H(+)(in) = a quinol + NAD(+) + 4 H(+)(out). In terms of biological role, NDH-1 shuttles electrons from NADH, via FMN and iron-sulfur (Fe-S) centers, to quinones in the respiratory chain. The immediate electron acceptor for the enzyme in this species is believed to be ubiquinone. Couples the redox reaction to proton translocation (for every two electrons transferred, four hydrogen ions are translocated across the cytoplasmic membrane), and thus conserves the redox energy in a proton gradient. This Desulfovibrio desulfuricans (strain ATCC 27774 / DSM 6949 / MB) protein is NADH-quinone oxidoreductase subunit K.